The following is a 271-amino-acid chain: ATP synthase subunit a (271 aa).

Helical transmembrane passes span 38 to 58 (FWTLNIDSMFFSVVLGLLFLA), 100 to 120 (LIAPLALTVFVWVFLMNLMDL), 146 to 166 (DVNITLSMALGVFILILFYSI), 220 to 240 (LIFILIAGLLPWWSQWILNVP), and 242 to 262 (AIFHILIITLQAFIFMVLTIV).

This sequence belongs to the ATPase A chain family. F-type ATPases have 2 components, CF(1) - the catalytic core - and CF(0) - the membrane proton channel. CF(1) has five subunits: alpha(3), beta(3), gamma(1), delta(1), epsilon(1). CF(0) has three main subunits: a(1), b(2) and c(9-12). The alpha and beta chains form an alternating ring which encloses part of the gamma chain. CF(1) is attached to CF(0) by a central stalk formed by the gamma and epsilon chains, while a peripheral stalk is formed by the delta and b chains.

It localises to the cell inner membrane. Key component of the proton channel; it plays a direct role in the translocation of protons across the membrane. In Enterobacter sp. (strain 638), this protein is ATP synthase subunit a.